The sequence spans 464 residues: Probable 3-ketoacyl-CoA synthase 21 (464 aa).

The chain crosses the membrane as a helical span at residues 21–41 (LLSSGVSVFEIFAGLLVVHLI). One can recognise an FAE domain in the interval 42–333 (YQRIRTRVKV…VIQHILCKKL (292 aa)). Active-site residues include Cys-187, His-352, His-356, His-385, and Asn-389.

Belongs to the thiolase-like superfamily. Chalcone/stilbene synthases family. As to expression, expressed in flowers.

It localises to the membrane. The catalysed reaction is a very-long-chain acyl-CoA + malonyl-CoA + H(+) = a very-long-chain 3-oxoacyl-CoA + CO2 + CoA. It functions in the pathway lipid metabolism; fatty acid biosynthesis. This chain is Probable 3-ketoacyl-CoA synthase 21, found in Arabidopsis thaliana (Mouse-ear cress).